A 379-amino-acid polypeptide reads, in one-letter code: Cytochrome b (379 aa).

Transmembrane regions (helical) follow at residues 33–53 (FGSL…FLAM), 77–98 (WTIR…FIHV), 113–133 (WNVG…GYVL), and 178–198 (FFAL…IHLL). H83 and H97 together coordinate heme b. Heme b is bound by residues H182 and H196. H201 provides a ligand contact to a ubiquinone. The next 4 helical transmembrane spans lie at 226 to 246 (TKDF…ALFY), 288 to 308 (LGGV…PFLQ), 320 to 340 (LSQF…WIGG), and 347 to 367 (FINI…FIMP).

This sequence belongs to the cytochrome b family. The cytochrome bc1 complex contains 11 subunits: 3 respiratory subunits (MT-CYB, CYC1 and UQCRFS1), 2 core proteins (UQCRC1 and UQCRC2) and 6 low-molecular weight proteins (UQCRH/QCR6, UQCRB/QCR7, UQCRQ/QCR8, UQCR10/QCR9, UQCR11/QCR10 and a cleavage product of UQCRFS1). This cytochrome bc1 complex then forms a dimer. Heme b serves as cofactor.

It is found in the mitochondrion inner membrane. Its function is as follows. Component of the ubiquinol-cytochrome c reductase complex (complex III or cytochrome b-c1 complex) that is part of the mitochondrial respiratory chain. The b-c1 complex mediates electron transfer from ubiquinol to cytochrome c. Contributes to the generation of a proton gradient across the mitochondrial membrane that is then used for ATP synthesis. This Lepilemur ankaranensis (Ankarana sportive lemur) protein is Cytochrome b (MT-CYB).